Here is a 452-residue protein sequence, read N- to C-terminus: Phosphoglucosamine mutase 2 (452 aa).

Ser-101 functions as the Phosphoserine intermediate in the catalytic mechanism. Mg(2+)-binding residues include Ser-101, Asp-245, Asp-247, and Asp-249. Ser-101 carries the phosphoserine modification.

The protein belongs to the phosphohexose mutase family. Mg(2+) is required as a cofactor. Activated by phosphorylation.

The enzyme catalyses alpha-D-glucosamine 1-phosphate = D-glucosamine 6-phosphate. Functionally, catalyzes the conversion of glucosamine-6-phosphate to glucosamine-1-phosphate. The polypeptide is Phosphoglucosamine mutase 2 (Shewanella amazonensis (strain ATCC BAA-1098 / SB2B)).